Here is a 331-residue protein sequence, read N- to C-terminus: UDP-N-acetylenolpyruvoylglucosamine reductase (331 aa).

In terms of domain architecture, FAD-binding PCMH-type spans 54-221 (RVGGAAELYV…TQATFQLQPG (168 aa)). The active site involves R200. S251 serves as the catalytic Proton donor. Residue E321 is part of the active site.

This sequence belongs to the MurB family. The cofactor is FAD.

It is found in the cytoplasm. It catalyses the reaction UDP-N-acetyl-alpha-D-muramate + NADP(+) = UDP-N-acetyl-3-O-(1-carboxyvinyl)-alpha-D-glucosamine + NADPH + H(+). Its pathway is cell wall biogenesis; peptidoglycan biosynthesis. Cell wall formation. This is UDP-N-acetylenolpyruvoylglucosamine reductase from Trichormus variabilis (strain ATCC 29413 / PCC 7937) (Anabaena variabilis).